The chain runs to 501 residues: Group 3 secretory phospholipase A2 (501 aa).

Positions 1–19 (MGVLVVLLGVLSFLGRTLG) are cleaved as a signal peptide. A disordered region spans residues 119–139 (RGPAESPAGTREKRAAGQNGV). The phospholipase A2-like stretch occupies residues 150–291 (GWTVPGTLWC…SWSSPATSLT (142 aa)). W158, G160, and G162 together coordinate Ca(2+). 4 disulfides stabilise this stretch: C159–C181, C180–C220, C187–C213, and C211–C244. N-linked (GlcNAc...) asparagine glycosylation occurs at N167. H184 is an active-site residue. D185 is a Ca(2+) binding site. D214 is an active-site residue. N280 carries N-linked (GlcNAc...) asparagine glycosylation. Polar residues predominate over residues 284 to 298 (SSPATSLTPSPQNPA). Positions 284–339 (SSPATSLTPSPQNPALSRPQPMQHPQQWPSEWKESKSPSKTNATALQAPVASPGSD) are disordered. N-linked (GlcNAc...) asparagine glycans are attached at residues N325 and N403.

This sequence belongs to the phospholipase A2 family. The cofactor is Ca(2+). In terms of processing, N-glycosylation does not affect the catalytic activity, but is required for proper secretion. A nonglycosylated form was observed in several cell types. In several cell types, the N- and C-termini are cleaved off.

Its subcellular location is the secreted. It is found in the cell membrane. It localises to the cytoplasm. The protein localises to the cytoskeleton. The protein resides in the microtubule organizing center. Its subcellular location is the centrosome. It is found in the centriole. It localises to the recycling endosome. The enzyme catalyses a 1,2-diacyl-sn-glycero-3-phosphocholine + H2O = a 1-acyl-sn-glycero-3-phosphocholine + a fatty acid + H(+). It carries out the reaction 1-hexadecanoyl-2-(9Z,12Z-octadecadienoyl)-sn-glycero-3-phosphocholine + H2O = (9Z,12Z)-octadecadienoate + 1-hexadecanoyl-sn-glycero-3-phosphocholine + H(+). It catalyses the reaction 1-hexadecanoyl-2-(5Z,8Z,11Z,14Z-eicosatetraenoyl)-sn-glycero-3-phosphocholine + H2O = 1-hexadecanoyl-sn-glycero-3-phosphocholine + (5Z,8Z,11Z,14Z)-eicosatetraenoate + H(+). The catalysed reaction is 1-hexadecanoyl-2-(9Z,12Z-octadecadienoyl)-sn-glycero-3-phosphoethanolamine + H2O = 1-hexadecanoyl-sn-glycero-3-phosphoethanolamine + (9Z,12Z)-octadecadienoate + H(+). The enzyme catalyses 1-hexadecanoyl-2-(5Z,8Z,11Z,14Z-eicosatetraenoyl)-sn-glycero-3-phosphoethanolamine + H2O = 1-hexadecanoyl-sn-glycero-3-phosphoethanolamine + (5Z,8Z,11Z,14Z)-eicosatetraenoate + H(+). Its function is as follows. Secretory calcium-dependent phospholipase A2 that primarily targets extracellular phospholipids. Hydrolyzes the ester bond of the fatty acyl group attached at sn-2 position of phospholipids without apparent head group selectivity. Contributes to phospholipid remodeling of low-density lipoprotein (LDL) and high-density lipoprotein (HDL) particles. Hydrolyzes LDL phospholipids releasing unsaturated fatty acids that regulate macrophage differentiation toward foam cells. May act in an autocrine and paracrine manner. Secreted by immature mast cells, acts on nearby fibroblasts upstream to PTDGS to synthesize prostaglandin D2 (PGD2), which in turn promotes mast cell maturation and degranulation via PTGDR. Secreted by epididymal epithelium, acts on immature sperm cells within the duct, modulating the degree of unsaturation of the fatty acyl components of phosphatidylcholines required for acrosome assembly and sperm cell motility. Facilitates the replacement of fatty acyl chains in phosphatidylcholines in sperm membranes from omega-6 and omega-9 to omega-3 polyunsaturated fatty acids (PUFAs). Coupled to lipoxygenase pathway, may process omega-6 PUFAs to generate oxygenated lipid mediators in the male reproductive tract. At pericentrosomal preciliary compartment, negatively regulates ciliogenesis likely by regulating endocytotic recycling of ciliary membrane protein. Coupled to cyclooxygenase pathway provides arachidonate to generate prostaglandin E2 (PGE2), a potent immunomodulatory lipid in inflammation and tumorigenesis. At colonic epithelial barrier, preferentially hydrolyzes phospholipids having arachidonate and docosahexaenoate at sn-2 position, contributing to the generation of oxygenated metabolites involved in colonic stem cell homeostasis. Releases C16:0 and C18:0 lysophosphatidylcholine subclasses from neuron plasma membranes and promotes neurite outgrowth and neuron survival. This Bos taurus (Bovine) protein is Group 3 secretory phospholipase A2 (PLA2G3).